Reading from the N-terminus, the 177-residue chain is Peptidyl-tRNA hydrolase 1 (177 aa).

Tyrosine 18 provides a ligand contact to tRNA. Histidine 23 functions as the Proton acceptor in the catalytic mechanism. Residues phenylalanine 65, asparagine 67, and asparagine 113 each contribute to the tRNA site.

The protein belongs to the PTH family. Monomer.

It is found in the cytoplasm. The catalysed reaction is an N-acyl-L-alpha-aminoacyl-tRNA + H2O = an N-acyl-L-amino acid + a tRNA + H(+). Its function is as follows. Hydrolyzes ribosome-free peptidyl-tRNAs (with 1 or more amino acids incorporated), which drop off the ribosome during protein synthesis, or as a result of ribosome stalling. Functionally, catalyzes the release of premature peptidyl moieties from peptidyl-tRNA molecules trapped in stalled 50S ribosomal subunits, and thus maintains levels of free tRNAs and 50S ribosomes. The chain is Peptidyl-tRNA hydrolase 1 from Corynebacterium glutamicum (strain ATCC 13032 / DSM 20300 / JCM 1318 / BCRC 11384 / CCUG 27702 / LMG 3730 / NBRC 12168 / NCIMB 10025 / NRRL B-2784 / 534).